Here is a 202-residue protein sequence, read N- to C-terminus: ATP-dependent Clp protease proteolytic subunit (202 aa).

Catalysis depends on Ser106, which acts as the Nucleophile. His131 is a catalytic residue.

The protein belongs to the peptidase S14 family. Fourteen ClpP subunits assemble into 2 heptameric rings which stack back to back to give a disk-like structure with a central cavity, resembling the structure of eukaryotic proteasomes.

Its subcellular location is the cytoplasm. The enzyme catalyses Hydrolysis of proteins to small peptides in the presence of ATP and magnesium. alpha-casein is the usual test substrate. In the absence of ATP, only oligopeptides shorter than five residues are hydrolyzed (such as succinyl-Leu-Tyr-|-NHMec, and Leu-Tyr-Leu-|-Tyr-Trp, in which cleavage of the -Tyr-|-Leu- and -Tyr-|-Trp bonds also occurs).. In terms of biological role, cleaves peptides in various proteins in a process that requires ATP hydrolysis. Has a chymotrypsin-like activity. Plays a major role in the degradation of misfolded proteins. This Acidovorax sp. (strain JS42) protein is ATP-dependent Clp protease proteolytic subunit.